Consider the following 332-residue polypeptide: tRNA N6-adenosine threonylcarbamoyltransferase (332 aa).

Fe cation contacts are provided by histidine 107 and histidine 111. Residues 129 to 133 (LVSGG), aspartate 162, glycine 175, and asparagine 267 each bind substrate. Aspartate 295 contributes to the Fe cation binding site.

It belongs to the KAE1 / TsaD family. Fe(2+) serves as cofactor.

Its subcellular location is the cytoplasm. It carries out the reaction L-threonylcarbamoyladenylate + adenosine(37) in tRNA = N(6)-L-threonylcarbamoyladenosine(37) in tRNA + AMP + H(+). Required for the formation of a threonylcarbamoyl group on adenosine at position 37 (t(6)A37) in tRNAs that read codons beginning with adenine. Is involved in the transfer of the threonylcarbamoyl moiety of threonylcarbamoyl-AMP (TC-AMP) to the N6 group of A37, together with TsaE and TsaB. TsaD likely plays a direct catalytic role in this reaction. The sequence is that of tRNA N6-adenosine threonylcarbamoyltransferase from Campylobacter hominis (strain ATCC BAA-381 / DSM 21671 / CCUG 45161 / LMG 19568 / NCTC 13146 / CH001A).